Here is a 293-residue protein sequence, read N- to C-terminus: Ribosomal protein L11 methyltransferase (293 aa).

The S-adenosyl-L-methionine site is built by Thr-145, Gly-166, Asp-188, and Asn-230.

This sequence belongs to the methyltransferase superfamily. PrmA family.

The protein localises to the cytoplasm. It carries out the reaction L-lysyl-[protein] + 3 S-adenosyl-L-methionine = N(6),N(6),N(6)-trimethyl-L-lysyl-[protein] + 3 S-adenosyl-L-homocysteine + 3 H(+). Functionally, methylates ribosomal protein L11. In Edwardsiella ictaluri (strain 93-146), this protein is Ribosomal protein L11 methyltransferase.